The sequence spans 157 residues: Regenerating islet-derived protein 4 (157 aa).

The N-terminal stretch at 1-22 is a signal peptide; the sequence is MASKCVRLLLLLSWVAGPEVLS. Cysteine 29 and cysteine 40 form a disulfide bridge. One can recognise a C-type lectin domain in the interval 36-154; the sequence is YRSHCYGYFR…CTKRQHFLCK (119 aa). 3 N-linked (GlcNAc...) asparagine glycosylation sites follow: asparagine 49, asparagine 62, and asparagine 101. Cystine bridges form between cysteine 57/cysteine 153 and cysteine 128/cysteine 145. A carbohydrate is bound by residues 97–101 and 134–136; these read DPQKN and KDK.

The protein localises to the secreted. Calcium-independent lectin displaying mannose-binding specificity and able to maintain carbohydrate recognition activity in an acidic environment. May be involved in inflammatory and metaplastic responses of the gastrointestinal epithelium. In Rattus norvegicus (Rat), this protein is Regenerating islet-derived protein 4 (Reg4).